The following is a 70-amino-acid chain: Large ribosomal subunit protein bL31 (70 aa).

Zn(2+)-binding residues include Cys16, Cys18, Cys38, and Cys41.

The protein belongs to the bacterial ribosomal protein bL31 family. Type A subfamily. In terms of assembly, part of the 50S ribosomal subunit. It depends on Zn(2+) as a cofactor.

Its function is as follows. Binds the 23S rRNA. The protein is Large ribosomal subunit protein bL31 of Vesicomyosocius okutanii subsp. Calyptogena okutanii (strain HA).